The chain runs to 1021 residues: Solute carrier family 12 member 3 (1021 aa).

Residues methionine 1 to glycine 137 lie on the Cytoplasmic side of the membrane. At serine 43 the chain carries Phosphoserine. A Phosphothreonine; by OXSR1 and STK39 modification is found at threonine 46. Serine 49 carries the post-translational modification Phosphoserine. A Phosphothreonine modification is found at threonine 50. 2 positions are modified to phosphothreonine; by OXSR1 and STK39: threonine 55 and threonine 60. Serine 73 bears the Phosphoserine mark. Residue serine 91 is modified to Phosphoserine; by OXSR1 and STK39. Threonine 124 carries the post-translational modification Phosphothreonine. Serine 126 bears the Phosphoserine mark. A discontinuously helical membrane pass occupies residues tryptophan 138–glycine 167. Residue leucine 148 coordinates Na(+). Position 149 (asparagine 149) interacts with polythiazide. Tryptophan 151 contacts Na(+). A helical membrane pass occupies residues isoleucine 168–isoleucine 189. The Cytoplasmic portion of the chain corresponds to serine 190–glycine 220. Residues leucine 221–arginine 243 traverse the membrane as a helical segment. Polythiazide is bound by residues asparagine 227 and histidine 234. Over aspartate 244 to aspartate 255 the chain is Extracellular. Transmembrane regions (helical) follow at residues proline 256–glutamate 280 and tryptophan 281–glycine 303. The Extracellular portion of the chain corresponds to threonine 304–glycine 338. Residues threonine 339–isoleucine 360 form a discontinuously helical membrane-spanning segment. Residue threonine 352 participates in polythiazide binding. Residues glycine 353, isoleucine 354, and leucine 355 each contribute to the chloride site. Asparagine 359 is a binding site for polythiazide. Residues serine 361–isoleucine 371 lie on the Cytoplasmic side of the membrane. The helical transmembrane segment at proline 372–isoleucine 393 threads the bilayer. Topologically, residues glycine 394–phenylalanine 453 are extracellular. Asparagine 406 is a glycosylation site (N-linked (GlcNAc...) asparagine). Cysteine 416 and cysteine 421 are joined by a disulfide. Asparagine 426 carries an N-linked (GlcNAc...) asparagine glycan. Cysteine 430 and cysteine 436 are disulfide-bonded. A helical membrane pass occupies residues alanine 454–alanine 477. Na(+) is bound by residues alanine 464, serine 467, and serine 468. Topologically, residues lysine 478–arginine 507 are cytoplasmic. The chain crosses the membrane as a helical span at residues glycine 508–isoleucine 522. Over alanine 523 to threonine 527 the chain is Extracellular. A helical transmembrane segment spans residues isoleucine 528–asparagine 544. Position 540 (tyrosine 540) interacts with chloride. Residues phenylalanine 545–lysine 567 lie on the Cytoplasmic side of the membrane. Helical transmembrane passes span tryptophan 568 to tryptophan 587 and alanine 588 to leucine 599. At leucine 600–glutamine 1021 the chain is on the cytoplasmic side. Residues serine 615–glycine 630 are scissor helix. ATP is bound by residues leucine 648, arginine 655, valine 677, glycine 741, leucine 780, and asparagine 781.

Belongs to the SLC12A transporter family. In terms of assembly, homodimer; adopts a domain-swap conformation at the scissor helices connecting the transmembrane domain and C-terminal domain. Interacts with KLHL3. Interacts with IL18R1; this interaction is increased by IL18 treatment. Post-translationally, ubiquitinated; ubiquitination is essential for regulation of endocytosis. The BCR(KLHL3) complex was initially identified as a candidate ubiquitin ligase for SLC12A3. However, it was later shown that it is not the case. In terms of processing, phosphorylated at Thr-46, Thr-55, Thr-60 and Ser-91 by OXSR1/OSR1 and STK39/SPAK downstream of WNK4, promoting its activity. Phosphorylated in response to IL18. In terms of tissue distribution, predominantly expressed in the kidney (at protein level). Localizes to the distal convoluted tubules (at protein level). Not detected in normal aorta, but abundantly expressed in fatty streaks and advanced atherosclerotic lesions (at protein level).

Its subcellular location is the cell membrane. The protein localises to the apical cell membrane. The enzyme catalyses chloride(out) + Na(+)(out) = chloride(in) + Na(+)(in). With respect to regulation, phosphorylation by OXSR1/OSR1 and STK39/SPAK in kidney distal convoluted tubules downstream of WNK4 promotes its activity. Also activated by OXSR1/OSR1 and STK39/SPAK downstream of WNK3. Target of thiazide diuretics used in the treatment of high blood pressure. Thiazide drugs, such as polythiazide, specifically inhibit SLC12A3/NCC transporter activity by competing with chloride for binding and by locking SLC12A3/NCC in an outward-facing conformation. Electroneutral sodium and chloride ion cotransporter, which acts as a key mediator of sodium and chloride reabsorption in kidney distal convoluted tubules. Also acts as a receptor for the pro-inflammatory cytokine IL18, thereby contributing to IL18-induced cytokine production, including IFNG, IL6, IL18 and CCL2. May act either independently of IL18R1, or in a complex with IL18R1. The chain is Solute carrier family 12 member 3 from Homo sapiens (Human).